We begin with the raw amino-acid sequence, 57 residues long: UPF0391 membrane protein RPB_2510 (57 aa).

Transmembrane regions (helical) follow at residues 6 to 26 (WALI…TGIS) and 35 to 55 (ILFY…FTIF).

The protein belongs to the UPF0391 family.

The protein resides in the cell membrane. In Rhodopseudomonas palustris (strain HaA2), this protein is UPF0391 membrane protein RPB_2510.